A 335-amino-acid polypeptide reads, in one-letter code: D-alanine--D-alanine ligase (335 aa).

Positions 124-329 constitute an ATP-grasp domain; the sequence is KMWFSALGVP…FTHYLYSNIK (206 aa). Position 154–209 (154–209) interacts with ATP; it reads ALENWGSIFIKAASQGSSVGCYRVDSQDELVSSLEQAFSFSPYVIVEKTINARELE. Positions 283, 296, and 298 each coordinate Mg(2+).

Belongs to the D-alanine--D-alanine ligase family. It depends on Mg(2+) as a cofactor. Requires Mn(2+) as cofactor.

The protein resides in the cytoplasm. It catalyses the reaction 2 D-alanine + ATP = D-alanyl-D-alanine + ADP + phosphate + H(+). It participates in cell wall biogenesis; peptidoglycan biosynthesis. Cell wall formation. This is D-alanine--D-alanine ligase from Shewanella woodyi (strain ATCC 51908 / MS32).